A 367-amino-acid chain; its full sequence is Peptide chain release factor 2 (367 aa).

Gln254 carries the post-translational modification N5-methylglutamine.

The protein belongs to the prokaryotic/mitochondrial release factor family. In terms of processing, methylated by PrmC. Methylation increases the termination efficiency of RF2.

The protein localises to the cytoplasm. Its function is as follows. Peptide chain release factor 2 directs the termination of translation in response to the peptide chain termination codons UGA and UAA. This Variovorax paradoxus (strain S110) protein is Peptide chain release factor 2.